The following is a 178-amino-acid chain: ATP synthase subunit delta (178 aa).

The protein belongs to the ATPase delta chain family. As to quaternary structure, F-type ATPases have 2 components, F(1) - the catalytic core - and F(0) - the membrane proton channel. F(1) has five subunits: alpha(3), beta(3), gamma(1), delta(1), epsilon(1). F(0) has three main subunits: a(1), b(2) and c(10-14). The alpha and beta chains form an alternating ring which encloses part of the gamma chain. F(1) is attached to F(0) by a central stalk formed by the gamma and epsilon chains, while a peripheral stalk is formed by the delta and b chains.

It is found in the cell membrane. F(1)F(0) ATP synthase produces ATP from ADP in the presence of a proton or sodium gradient. F-type ATPases consist of two structural domains, F(1) containing the extramembraneous catalytic core and F(0) containing the membrane proton channel, linked together by a central stalk and a peripheral stalk. During catalysis, ATP synthesis in the catalytic domain of F(1) is coupled via a rotary mechanism of the central stalk subunits to proton translocation. In terms of biological role, this protein is part of the stalk that links CF(0) to CF(1). It either transmits conformational changes from CF(0) to CF(1) or is implicated in proton conduction. This is ATP synthase subunit delta from Desulfitobacterium hafniense (strain DSM 10664 / DCB-2).